The sequence spans 926 residues: BTB/POZ domain-containing protein KCTD19 (926 aa).

The region spanning 18-72 is the BTB 1 domain; the sequence is NVGGWHFSVPRSKLSQFPDSLLWKEASALTSSESQRLFIDRDGSTFRHVHYYLYT. Residue serine 270 is modified to Phosphoserine. The 88-residue stretch at 398-485 folds into the BTB 2 domain; the sequence is IKVYVGSHWY…YHIPSLSEAL (88 aa). The interval 673–751 is disordered; sequence GSEAASQPST…PAPEQPLPEA (79 aa). Basic and acidic residues predominate over residues 730-742; it reads DWSKQRTKERESP.

Identified in a complex with ZNF541, HDAC1 and HSPA2. Identified in a complex with ZNF541 and HDAC1. Identified in a complex with HDAC1, HDAC2, DNTTIP1 and ZNF541.

The protein localises to the nucleus. In terms of biological role, transcription regulator which is essential for male fertility and for the completion of meiotic prophase in spermatocytes. Regulates progression of the pachytene stage of meiotic prophase and promotes the transcriptional activation activity ZNF541. Required for the organization of chromosomes during metaphase I. This Homo sapiens (Human) protein is BTB/POZ domain-containing protein KCTD19 (KCTD19).